Consider the following 643-residue polypeptide: Fructose-1,6-bisphosphatase class 3 (643 aa).

Belongs to the FBPase class 3 family. Mn(2+) serves as cofactor.

It catalyses the reaction beta-D-fructose 1,6-bisphosphate + H2O = beta-D-fructose 6-phosphate + phosphate. It functions in the pathway carbohydrate biosynthesis; gluconeogenesis. The chain is Fructose-1,6-bisphosphatase class 3 from Lacticaseibacillus casei (strain BL23) (Lactobacillus casei).